We begin with the raw amino-acid sequence, 404 residues long: MQVSIACTEQNLRSRSSEDRLCGPRPGPGGGNGGPVGGGHGNPPGGGGLGSKSRTAVVPRPPAPAGALRESTGRGTGMKYRNLGKSGLRVSCLGLGTWVTFGSQISDETAEDLLTVAYEHGVNLFDTAEVYAAGKAERTLGNILKSKGWRRSSYVITTKIFWGGQAETERGLSRKHIIEGLQGSLDRLQLEYVDIVFANRSDPSSPMEEIVRAMTYVINQGLALYWGTSRWSAAEIMEAYSMARQFNLIPPVCEQAENHFFQREKVEMQLPELYHKIGVGSVTWSPLACSLITSKYDGQVPDACKATVKGYQWLKEKVQSEDGKKQQARVTDLLPIAHQLGCTVAQLAIAWCLRSEGVSSVLLGVSSAEQLMEHLGSLQVLGQLTPQTVMEIDALLGNKSHSKK.

Residues 1–14 (MQVSIACTEQNLRS) show a composition bias toward polar residues. The interval 1 to 78 (MQVSIACTEQ…RESTGRGTGM (78 aa)) is disordered. The span at 28 to 50 (PGGGNGGPVGGGHGNPPGGGGLG) shows a compositional bias: gly residues. Thr97, Trp98, Gln104, and Asp126 together coordinate NADP(+). Tyr131 functions as the Proton donor/acceptor in the catalytic mechanism. Positions 199, 229, 230, 255, 284, 285, 286, 287, 288, 289, 295, 305, 364, 366, 370, and 373 each coordinate NADP(+).

It belongs to the shaker potassium channel beta subunit family. In terms of assembly, forms heteromultimeric complex with alpha subunits. Interacts with KCNA5 and KCNB2. Predominantly expressed in brain. Strongest expression in olfactory bulb and thalamic nuclei. Not detected in heart, spleen, lung, liver, skeletal muscle, kidney and testis.

Its subcellular location is the cytoplasm. In terms of biological role, regulatory subunit of the voltage-gated potassium (Kv) channels composed of pore-forming and potassium-conducting alpha subunits and of regulatory beta subunits. The beta-3/KCNAB3 subunit may mediate closure of potassium channels. Inactivates Kv1.4/KCNA4 alpha subunit-containing Kv channel current but not Kv1.1/KCNA1 or Kv1.5/KCNA5 channels. May display nicotinamide adenine dinucleotide phosphate (NADPH)-dependent aldoketoreductase activity. The binding of oxidized and reduced NADP(H) cofactors may be required for the regulation of potassium channel activity. This chain is Voltage-gated potassium channel subunit beta-3, found in Rattus norvegicus (Rat).